The primary structure comprises 311 residues: tRNA-cytidine(32) 2-sulfurtransferase (311 aa).

A disordered region spans residues 18–38 (KVGADHGPSEENGSSHPLFDN). The PP-loop motif motif lies at 77 to 82 (SGGKDS). C152, C155, and C243 together coordinate [4Fe-4S] cluster.

Belongs to the TtcA family. Homodimer. Mg(2+) serves as cofactor. It depends on [4Fe-4S] cluster as a cofactor.

The protein resides in the cytoplasm. The catalysed reaction is cytidine(32) in tRNA + S-sulfanyl-L-cysteinyl-[cysteine desulfurase] + AH2 + ATP = 2-thiocytidine(32) in tRNA + L-cysteinyl-[cysteine desulfurase] + A + AMP + diphosphate + H(+). It functions in the pathway tRNA modification. Its function is as follows. Catalyzes the ATP-dependent 2-thiolation of cytidine in position 32 of tRNA, to form 2-thiocytidine (s(2)C32). The sulfur atoms are provided by the cysteine/cysteine desulfurase (IscS) system. This chain is tRNA-cytidine(32) 2-sulfurtransferase, found in Agrobacterium fabrum (strain C58 / ATCC 33970) (Agrobacterium tumefaciens (strain C58)).